A 296-amino-acid chain; its full sequence is Glycine--tRNA ligase alpha subunit (296 aa).

It belongs to the class-II aminoacyl-tRNA synthetase family. In terms of assembly, tetramer of two alpha and two beta subunits.

The protein localises to the cytoplasm. It carries out the reaction tRNA(Gly) + glycine + ATP = glycyl-tRNA(Gly) + AMP + diphosphate. The protein is Glycine--tRNA ligase alpha subunit of Desulfitobacterium hafniense (strain DSM 10664 / DCB-2).